Consider the following 108-residue polypeptide: Small ribosomal subunit protein uS17 (108 aa).

The protein belongs to the universal ribosomal protein uS17 family. Part of the 30S ribosomal subunit.

Its function is as follows. One of the primary rRNA binding proteins, it binds specifically to the 5'-end of 16S ribosomal RNA. This is Small ribosomal subunit protein uS17 from Methanocorpusculum labreanum (strain ATCC 43576 / DSM 4855 / Z).